The primary structure comprises 963 residues: Unconventional myosin-XIX (963 aa).

Residues His-35–Ala-758 form the Myosin motor domain. Gly-132 to Thr-139 serves as a coordination point for ATP. The segment at Leu-602 to Ser-624 is actin-binding. IQ domains lie at Glu-762–Lys-782 and Gln-783–Val-812. Residues Ser-829 to Val-963 are myMOMA region.

Belongs to the TRAFAC class myosin-kinesin ATPase superfamily. Myosin family. As to quaternary structure, myosin is a hexamer of 2 heavy chains and 4 light chains: interacts with myosin light chains MYL9 and MYL12B.

It localises to the mitochondrion outer membrane. Its subcellular location is the cytoplasm. The protein localises to the cytoskeleton. In terms of biological role, actin-based motor molecule with ATPase activity that localizes to the mitochondrion outer membrane. Motor protein that moves towards the plus-end of actin filaments. Required for mitochondrial inheritance during mitosis. May be involved in mitochondrial transport or positioning. The sequence is that of Unconventional myosin-XIX from Mus musculus (Mouse).